The sequence spans 700 residues: Polyphosphate kinase (700 aa).

Position 45 (asparagine 45) interacts with ATP. Mg(2+)-binding residues include arginine 373 and arginine 403. The PLD phosphodiesterase 1 domain maps to proline 428–threonine 462. Catalysis depends on histidine 433, which acts as the Phosphohistidine intermediate. Positions 466, 562, and 590 each coordinate ATP. Residues aspartate 585–asparagine 615 enclose the PLD phosphodiesterase 2 domain.

The protein belongs to the polyphosphate kinase 1 (PPK1) family. The cofactor is Mg(2+). In terms of processing, an intermediate of this reaction is the autophosphorylated ppk in which a phosphate is covalently linked to a histidine residue through a N-P bond.

It catalyses the reaction [phosphate](n) + ATP = [phosphate](n+1) + ADP. Its function is as follows. Catalyzes the reversible transfer of the terminal phosphate of ATP to form a long-chain polyphosphate (polyP). The chain is Polyphosphate kinase from Vibrio vulnificus (strain CMCP6).